The following is a 156-amino-acid chain: ATP synthase subunit b (156 aa).

The helical transmembrane segment at 5 to 27 (ITLIGQMITFAIFVGFTMKFVWP) threads the bilayer.

The protein belongs to the ATPase B chain family. In terms of assembly, F-type ATPases have 2 components, F(1) - the catalytic core - and F(0) - the membrane proton channel. F(1) has five subunits: alpha(3), beta(3), gamma(1), delta(1), epsilon(1). F(0) has three main subunits: a(1), b(2) and c(10-14). The alpha and beta chains form an alternating ring which encloses part of the gamma chain. F(1) is attached to F(0) by a central stalk formed by the gamma and epsilon chains, while a peripheral stalk is formed by the delta and b chains.

The protein resides in the cell inner membrane. Its function is as follows. F(1)F(0) ATP synthase produces ATP from ADP in the presence of a proton or sodium gradient. F-type ATPases consist of two structural domains, F(1) containing the extramembraneous catalytic core and F(0) containing the membrane proton channel, linked together by a central stalk and a peripheral stalk. During catalysis, ATP synthesis in the catalytic domain of F(1) is coupled via a rotary mechanism of the central stalk subunits to proton translocation. Functionally, component of the F(0) channel, it forms part of the peripheral stalk, linking F(1) to F(0). The sequence is that of ATP synthase subunit b from Francisella tularensis subsp. tularensis (strain SCHU S4 / Schu 4).